We begin with the raw amino-acid sequence, 344 residues long: Phenylalanine--tRNA ligase alpha subunit (344 aa).

Residue Glu255 coordinates Mg(2+).

It belongs to the class-II aminoacyl-tRNA synthetase family. Phe-tRNA synthetase alpha subunit type 1 subfamily. As to quaternary structure, tetramer of two alpha and two beta subunits. It depends on Mg(2+) as a cofactor.

It is found in the cytoplasm. It catalyses the reaction tRNA(Phe) + L-phenylalanine + ATP = L-phenylalanyl-tRNA(Phe) + AMP + diphosphate + H(+). This is Phenylalanine--tRNA ligase alpha subunit from Persephonella marina (strain DSM 14350 / EX-H1).